A 77-amino-acid chain; its full sequence is Protein UL148C (77 aa).

Transmembrane regions (helical) follow at residues 10-30 (VLYL…AVAV) and 35-55 (IAWA…VGAA).

The protein resides in the host membrane. This chain is Protein UL148C (UL148C), found in Homo sapiens (Human).